The following is a 397-amino-acid chain: Mannonate dehydratase (397 aa).

This sequence belongs to the mannonate dehydratase family. Fe(2+) is required as a cofactor. It depends on Mn(2+) as a cofactor.

It carries out the reaction D-mannonate = 2-dehydro-3-deoxy-D-gluconate + H2O. It participates in carbohydrate metabolism; pentose and glucuronate interconversion. Its function is as follows. Catalyzes the dehydration of D-mannonate. This is Mannonate dehydratase from Yersinia pestis bv. Antiqua (strain Antiqua).